Here is a 131-residue protein sequence, read N- to C-terminus: Lymphocyte antigen 6E (131 aa).

Positions 1 to 20 (MKIFLPVLLAALLGVERASS) are cleaved as a signal peptide. Residues 21–101 (LMCFSCLNQK…CCQSFLCNFS (81 aa)) form the UPAR/Ly6 domain. Cystine bridges form between Cys-23/Cys-48, Cys-26/Cys-35, Cys-41/Cys-71, Cys-75/Cys-92, and Cys-93/Cys-98. Residue Asn-99 is glycosylated (N-linked (GlcNAc...) asparagine). Ser-101 carries the GPI-anchor amidated serine lipid modification. Positions 102–131 (AADGGLRASVTLLGAGLLLSLLPALLRFGP) are cleaved as a propeptide — removed in mature form.

Interacts with CHRNA4. Widely expressed, predominantly in liver, kidney, ovary, spleen and peripheral blood Leukocytes.

It localises to the cell membrane. Functionally, GPI-anchored cell surface protein that regulates T-lymphocytes proliferation, differentiation, and activation. Regulates the T-cell receptor (TCR) signaling by interacting with component CD3Z/CD247 at the plasma membrane, leading to CD3Z/CD247 phosphorylation modulation. Restricts the entry of human coronaviruses, including SARS-CoV, MERS-CoV and SARS-CoV-2, by interfering with spike protein-mediated membrane fusion. Also plays an essential role in placenta formation by acting as the main receptor for syncytin-A (SynA). Therefore, participates in the normal fusion of syncytiotrophoblast layer I (SynT-I) and in the proper morphogenesis of both fetal and maternal vasculatures within the placenta. May also act as a modulator of nicotinic acetylcholine receptors (nAChRs) activity. In terms of biological role, (Microbial infection) Promotes entry, likely through an enhanced virus-cell fusion process, of various viruses including HIV-1, West Nile virus, dengue virus and Zika virus. In contrast, the paramyxovirus PIV5, which enters at the plasma membrane, does not require LY6E. Mechanistically, adopts a microtubule-like organization upon viral infection and enhances viral uncoating after endosomal escape. The protein is Lymphocyte antigen 6E of Homo sapiens (Human).